Consider the following 554-residue polypeptide: Flavin-dependent halogenase ascD (554 aa).

G15, G18, and E48 together coordinate FAD. Chloride contacts are provided by S331 and G332. V333 is an FAD binding site.

This sequence belongs to the flavin-dependent halogenase family.

It catalyses the reaction ilicicolin B + FADH2 + chloride + O2 = ilicicolin A + FAD + 2 H2O + H(+). Its pathway is secondary metabolite biosynthesis; terpenoid biosynthesis. Its function is as follows. Flavin-dependent halogenase; part of the asc-1 gene cluster that mediates the biosynthesis of both ascochlorin and ascofuranone, a strong inhibitor of cyanide-insensitive alternative oxidases and a promising drug candidate against African trypanosomiasis. The first step in the pathway is performed by the non-reducing polyketide synthase ascC that produces orsellinic acid by condensing acetyl-CoA with 3 malonyl-CoA units. Orsellinic acid is then prenylated by the prenyltransferase ascA to yield ilicicolinic acid B. Ilicicolinic acid B is further reduced to ilicicolin B by the reductase ascB. The halogenase ascD then chlorinates ilicicolin B to produce ilicicolin A which is converted to ilicicolin A epoxide by the cytochrome P450 monooxygenase ascE that catalyzes stereoselective epoxidation of the terminal double bond of the prenyl group. Ilicicolin A epoxide is the last common precursor for the biosynthesis of ascofuranone and ascochlorin. The terpene cyclase ascF produces a monocyclic terpene, and the cyclization reaction is proposed to be initiated by protonation of the terminal epoxide of ilicicolin A epoxide to generate a monocyclic tertiarycation, which is followed by a series of hydride and methyl shifts with abstraction of proton, leading to the formation of the (14S,15R,19R)-trimethylcyclohexanone ring structure of ilicicolin C, which is finally reduced to ascochlorin by the dehydrogenase ascG. On the other hand, ilicicolin A epoxide is hydroxylated by the cytochrome P450 monooxygenase ascH, and the resultant product is cyclized by the terpene cyclase ascI to ascofuranol via protonation-initiated epoxide ring opening, which facilitates the 6-endo-tet cyclization to form the tetrahy-drofuran ring. Finally, ascofuranol is oxidized into ascofuranone by ascJ. In Acremonium egyptiacum (Oospora egyptiaca), this protein is Flavin-dependent halogenase ascD.